The chain runs to 333 residues: Quinolinate synthase (333 aa).

Residues His-41 and Ser-58 each contribute to the iminosuccinate site. Position 103 (Cys-103) interacts with [4Fe-4S] cluster. Iminosuccinate contacts are provided by residues 129–131 (YIN) and Ser-146. A [4Fe-4S] cluster-binding site is contributed by Cys-189. Iminosuccinate contacts are provided by residues 215–217 (HPE) and Thr-232. Cys-282 provides a ligand contact to [4Fe-4S] cluster.

The protein belongs to the quinolinate synthase family. Type 2 subfamily. Requires [4Fe-4S] cluster as cofactor.

Its subcellular location is the cytoplasm. The catalysed reaction is iminosuccinate + dihydroxyacetone phosphate = quinolinate + phosphate + 2 H2O + H(+). It participates in cofactor biosynthesis; NAD(+) biosynthesis; quinolinate from iminoaspartate: step 1/1. Its function is as follows. Catalyzes the condensation of iminoaspartate with dihydroxyacetone phosphate to form quinolinate. This Prochlorococcus marinus (strain MIT 9303) protein is Quinolinate synthase.